Here is a 3462-residue protein sequence, read N- to C-terminus: Extracellular matrix-binding protein EbhA (3462 aa).

The segment covering 1-19 (MVQQSTTVAEAQGNEQKAN) has biased composition (polar residues). A disordered region spans residues 1–21 (MVQQSTTVAEAQGNEQKANNV). FIVAR domains lie at 24–82 (AMDK…INQA), 150–208 (AMGN…VEQA), 276–334 (AMTQ…ITAA), 402–460 (AMTQ…IQQA), 528–586 (AMTN…VEQA), 654–712 (AMTQ…VAQA), 780–838 (AMGT…VTQA), 906–964 (AMSN…ITRA), 1032–1093 (AMDQ…ITNE), 1158–1216 (AMEL…VNGA), 1284–1342 (AMGN…VEQA), 1410–1467 (AMHG…INQA), 1535–1593 (LMDA…VSSA), 1661–1719 (AMEA…VEQL), 1787–1845 (AMQA…VEQL), 1913–1971 (AMET…VDQV), 2039–2093 (SMDQ…VDQA), 2161–2220 (AMDQ…VIKL), and 2415–2471 (AMET…INGA). Residues 3267–3289 (VIKNAIGVVGISGLLASFWFFIA) traverse the membrane as a helical segment. Positions 3365-3462 (RRKEDEEDVE…KKKKAKKNKK (98 aa)) are disordered. Composition is skewed to basic and acidic residues over residues 3380–3390 (TDEKVLKDNEH) and 3429–3439 (QKDNQSKDKKS). Residues 3444–3462 (TSKKVAAKKKKKKAKKNKK) show a composition bias toward basic residues.

It localises to the cell membrane. The protein is Extracellular matrix-binding protein EbhA (ebhA) of Staphylococcus aureus (strain Newman).